Consider the following 96-residue polypeptide: Large ribosomal subunit protein uL23 (96 aa).

This sequence belongs to the universal ribosomal protein uL23 family. Part of the 50S ribosomal subunit. Contacts protein L29, and trigger factor when it is bound to the ribosome.

Its function is as follows. One of the early assembly proteins it binds 23S rRNA. One of the proteins that surrounds the polypeptide exit tunnel on the outside of the ribosome. Forms the main docking site for trigger factor binding to the ribosome. The protein is Large ribosomal subunit protein uL23 of Maridesulfovibrio salexigens (strain ATCC 14822 / DSM 2638 / NCIMB 8403 / VKM B-1763) (Desulfovibrio salexigens).